The following is a 239-amino-acid chain: 1-(5-phosphoribosyl)-5-[(5-phosphoribosylamino)methylideneamino] imidazole-4-carboxamide isomerase (239 aa).

The active-site Proton acceptor is the Asp-8. Asp-129 (proton donor) is an active-site residue.

This sequence belongs to the HisA/HisF family.

The protein resides in the cytoplasm. It carries out the reaction 1-(5-phospho-beta-D-ribosyl)-5-[(5-phospho-beta-D-ribosylamino)methylideneamino]imidazole-4-carboxamide = 5-[(5-phospho-1-deoxy-D-ribulos-1-ylimino)methylamino]-1-(5-phospho-beta-D-ribosyl)imidazole-4-carboxamide. The protein operates within amino-acid biosynthesis; L-histidine biosynthesis; L-histidine from 5-phospho-alpha-D-ribose 1-diphosphate: step 4/9. The sequence is that of 1-(5-phosphoribosyl)-5-[(5-phosphoribosylamino)methylideneamino] imidazole-4-carboxamide isomerase from Legionella pneumophila (strain Lens).